The sequence spans 106 residues: Small ribosomal subunit protein uS10 (106 aa).

The protein belongs to the universal ribosomal protein uS10 family. As to quaternary structure, part of the 30S ribosomal subunit.

In terms of biological role, involved in the binding of tRNA to the ribosomes. This chain is Small ribosomal subunit protein uS10, found in Caldicellulosiruptor bescii (strain ATCC BAA-1888 / DSM 6725 / KCTC 15123 / Z-1320) (Anaerocellum thermophilum).